The following is a 189-amino-acid chain: MSIKSDRWIKRMAEQHAMIEPFEPGQVKHDAAGQRIVSFGTSSYGYDVRCSREFKVFTNINSTIVDPKHFDPGSFVDIESDVCIIPPNSFALARTVEYFRIPRDTLVVCLGKSTYARCGIIVNVTPLEPEWEGHVTLEFSNTTPLPARIYANEGVAQMLFFQSDEVCETSYKDRGGKYQGQTGVTLPRT.

Residues 112 to 117 (KSTYAR), 136 to 138 (TLE), glutamine 157, tyrosine 171, and glutamine 181 each bind dCTP. The Proton donor/acceptor role is filled by glutamate 138.

Belongs to the dCTP deaminase family. Homotrimer.

The enzyme catalyses dCTP + H2O + H(+) = dUTP + NH4(+). Its pathway is pyrimidine metabolism; dUMP biosynthesis; dUMP from dCTP (dUTP route): step 1/2. Catalyzes the deamination of dCTP to dUTP. The sequence is that of dCTP deaminase from Xanthomonas euvesicatoria pv. vesicatoria (strain 85-10) (Xanthomonas campestris pv. vesicatoria).